The chain runs to 171 residues: Dual-action ribosomal maturation protein DarP (171 aa).

Positions 1–30 are disordered; sequence MPKRPAENPEQSDDFVSKSQKKREMAERQE.

Belongs to the DarP family.

The protein resides in the cytoplasm. Functionally, member of a network of 50S ribosomal subunit biogenesis factors which assembles along the 30S-50S interface, preventing incorrect 23S rRNA structures from forming. Promotes peptidyl transferase center (PTC) maturation. This is Dual-action ribosomal maturation protein DarP from Idiomarina loihiensis (strain ATCC BAA-735 / DSM 15497 / L2-TR).